Consider the following 230-residue polypeptide: Cytidylate kinase (230 aa).

ATP is bound at residue 12–20 (GPSGAGKGT).

Belongs to the cytidylate kinase family. Type 1 subfamily.

Its subcellular location is the cytoplasm. It carries out the reaction CMP + ATP = CDP + ADP. The enzyme catalyses dCMP + ATP = dCDP + ADP. The sequence is that of Cytidylate kinase from Shewanella pealeana (strain ATCC 700345 / ANG-SQ1).